Consider the following 122-residue polypeptide: Serum amyloid A-1 protein (122 aa).

An N-terminal signal peptide occupies residues M1 to S18. The interval R19 to A45 is important for amyloid formation; forms amyloid fibrils in vitro. Residues L95–Y122 constitute a propeptide, often cleaved during amyloidogenesis. The tract at residues Q98–Y122 is disordered. An N4,N4-dimethylasparagine modification is found at N101.

Belongs to the SAA family. Homohexamer; dimer of trimers. Can form amyloid fibrils after partial proteolysis; the native, undenatured protein does not form amyloid fibrils (in vitro). Apolipoprotein of the HDL complex. Binds to heparin. In terms of processing, this protein is the precursor of amyloid protein A, which is formed by the removal of approximately 24 residues from the C-terminal end. As to expression, expressed by the liver; secreted in plasma (at protein level).

The protein localises to the secreted. In terms of biological role, major acute phase protein. In Homo sapiens (Human), this protein is Serum amyloid A-1 protein (SAA1).